The sequence spans 421 residues: U-box domain-containing protein 26 (421 aa).

A U-box domain is found at 13–87 (QIPYHFRCPI…QEWCVANRSN (75 aa)).

It carries out the reaction S-ubiquitinyl-[E2 ubiquitin-conjugating enzyme]-L-cysteine + [acceptor protein]-L-lysine = [E2 ubiquitin-conjugating enzyme]-L-cysteine + N(6)-ubiquitinyl-[acceptor protein]-L-lysine.. The protein operates within protein modification; protein ubiquitination. Its function is as follows. Functions as an E3 ubiquitin ligase. This is U-box domain-containing protein 26 (PUB26) from Arabidopsis thaliana (Mouse-ear cress).